The following is a 251-amino-acid chain: Small ribosomal subunit protein uS3 (251 aa).

The KH type-2 domain occupies 39 to 111; sequence IRELINNFSK…DVDLNILEVK (73 aa).

This sequence belongs to the universal ribosomal protein uS3 family. In terms of assembly, part of the 30S ribosomal subunit. Forms a tight complex with proteins S10 and S14.

Functionally, binds the lower part of the 30S subunit head. Binds mRNA in the 70S ribosome, positioning it for translation. The sequence is that of Small ribosomal subunit protein uS3 from Phytoplasma sp. (strain STRAWB1).